A 160-amino-acid chain; its full sequence is Transcription elongation factor GreA (160 aa).

Residues Met-1–Ile-31 adopt a coiled-coil conformation.

This sequence belongs to the GreA/GreB family.

In terms of biological role, necessary for efficient RNA polymerase transcription elongation past template-encoded arresting sites. The arresting sites in DNA have the property of trapping a certain fraction of elongating RNA polymerases that pass through, resulting in locked ternary complexes. Cleavage of the nascent transcript by cleavage factors such as GreA or GreB allows the resumption of elongation from the new 3'terminus. GreA releases sequences of 2 to 3 nucleotides. This Streptococcus suis (strain 98HAH33) protein is Transcription elongation factor GreA.